Here is a 141-residue protein sequence, read N- to C-terminus: Nucleoside diphosphate kinase (141 aa).

The ATP site is built by lysine 11, phenylalanine 59, arginine 87, threonine 93, arginine 104, and asparagine 114. The Pros-phosphohistidine intermediate role is filled by histidine 117.

The protein belongs to the NDK family. In terms of assembly, homotetramer. The cofactor is Mg(2+).

It is found in the cytoplasm. It carries out the reaction a 2'-deoxyribonucleoside 5'-diphosphate + ATP = a 2'-deoxyribonucleoside 5'-triphosphate + ADP. The catalysed reaction is a ribonucleoside 5'-diphosphate + ATP = a ribonucleoside 5'-triphosphate + ADP. Its function is as follows. Major role in the synthesis of nucleoside triphosphates other than ATP. The ATP gamma phosphate is transferred to the NDP beta phosphate via a ping-pong mechanism, using a phosphorylated active-site intermediate. The chain is Nucleoside diphosphate kinase from Burkholderia multivorans (strain ATCC 17616 / 249).